The following is a 110-amino-acid chain: MSALLVEIDKDQFQAEVLEAEGYVLVDYFSDGCVPCKALMPDVEELAAKYEGKVAFRKFNTSSARRLAISQKILGLPTITLYKGGQKVEEVTKDDATRENIDAMIAKHVG.

Residues 2–110 form the Thioredoxin domain; sequence SALLVEIDKD…IDAMIAKHVG (109 aa). Cys33 and Cys36 form a disulfide bridge.

This sequence belongs to the thioredoxin family.

Its function is as follows. Participates in various redox reactions through the reversible oxidation of its active center dithiol to a disulfide and catalyzes dithiol-disulfide exchange reactions. The polypeptide is Thioredoxin (trxA) (Peptoclostridium acidaminophilum (Eubacterium acidaminophilum)).